We begin with the raw amino-acid sequence, 239 residues long: 6-phosphogluconolactonase (239 aa).

This sequence belongs to the glucosamine/galactosamine-6-phosphate isomerase family. 6-phosphogluconolactonase subfamily.

It carries out the reaction 6-phospho-D-glucono-1,5-lactone + H2O = 6-phospho-D-gluconate + H(+). Its pathway is carbohydrate degradation; pentose phosphate pathway; D-ribulose 5-phosphate from D-glucose 6-phosphate (oxidative stage): step 2/3. Functionally, hydrolysis of 6-phosphogluconolactone to 6-phosphogluconate. This chain is 6-phosphogluconolactonase (pgl), found in Xylella fastidiosa (strain Temecula1 / ATCC 700964).